Here is a 374-residue protein sequence, read N- to C-terminus: UDP-N-acetylglucosamine--N-acetylmuramyl-(pentapeptide) pyrophosphoryl-undecaprenol N-acetylglucosamine transferase (374 aa).

Residues 13-15, asparagine 124, arginine 165, serine 193, and glutamine 294 contribute to the UDP-N-acetyl-alpha-D-glucosamine site; that span reads TGG.

The protein belongs to the glycosyltransferase 28 family. MurG subfamily.

Its subcellular location is the cell inner membrane. The catalysed reaction is di-trans,octa-cis-undecaprenyl diphospho-N-acetyl-alpha-D-muramoyl-L-alanyl-D-glutamyl-meso-2,6-diaminopimeloyl-D-alanyl-D-alanine + UDP-N-acetyl-alpha-D-glucosamine = di-trans,octa-cis-undecaprenyl diphospho-[N-acetyl-alpha-D-glucosaminyl-(1-&gt;4)]-N-acetyl-alpha-D-muramoyl-L-alanyl-D-glutamyl-meso-2,6-diaminopimeloyl-D-alanyl-D-alanine + UDP + H(+). It participates in cell wall biogenesis; peptidoglycan biosynthesis. In terms of biological role, cell wall formation. Catalyzes the transfer of a GlcNAc subunit on undecaprenyl-pyrophosphoryl-MurNAc-pentapeptide (lipid intermediate I) to form undecaprenyl-pyrophosphoryl-MurNAc-(pentapeptide)GlcNAc (lipid intermediate II). This Rhizobium etli (strain CIAT 652) protein is UDP-N-acetylglucosamine--N-acetylmuramyl-(pentapeptide) pyrophosphoryl-undecaprenol N-acetylglucosamine transferase.